Here is a 403-residue protein sequence, read N- to C-terminus: Peroxisomal membrane protein PEX13 (403 aa).

The segment covering 1–11 has biased composition (pro residues); sequence MASQPPPPPKP. The disordered stretch occupies residues 1 to 69; sequence MASQPPPPPK…SQQTGGNNVN (69 aa). Topologically, residues 1 to 134 are peroxisomal matrix; it reads MASQPPPPPK…SSRGAFQSIE (134 aa). The span at 59–69 shows a compositional bias: polar residues; it reads PSQQTGGNNVN. A helical membrane pass occupies residues 135-155; it reads SIVHAFASVSMMMDATFSAVY. Residues 145 to 233 form a targeting to peroxisomes region; it reads MMMDATFSAV…EDQANNSAKS (89 aa). Residues 156-174 lie on the Cytoplasmic side of the membrane; that stretch reads NSFRAVLDVANHFSRLKIH. The chain crosses the membrane as a helical span at residues 175–192; it reads FTKVFSAFALVRTIRYLY. The interval 175–196 is interaction with PEX19; that stretch reads FTKVFSAFALVRTIRYLYRRLQ. Residues 193-233 are Peroxisomal matrix-facing; it reads RRLQWMMGLRRGSENEDLWAESEGTVACLGAEDQANNSAKS. Residues 234 to 254 form a helical membrane-spanning segment; it reads WPIFLFFAVILGGPYLIWKLL. At 255–403 the chain is on the cytoplasmic side; it reads STHSDEVTDS…TGKNGDKQDL (149 aa). The 65-residue stretch at 272 to 336 folds into the SH3 domain; it reads DDHVVARAEY…PANYVKILGK (65 aa). Disordered stretches follow at residues 341–364 and 381–403; these read KTVESSTMPKQQQSFTNPTSVKGV and FVETNKVAGTPDSTGKNGDKQDL. Residues 344–364 are compositionally biased toward polar residues; sequence ESSTMPKQQQSFTNPTSVKGV.

It belongs to the peroxin-13 family. As to quaternary structure, interacts (via SH3 domain) with PEX14 (via SH3-binding motif); forming the PEX13-PEX14 docking complex. Interacts with PEX19.

The protein resides in the peroxisome membrane. In terms of biological role, component of the PEX13-PEX14 docking complex, a translocon channel that specifically mediates the import of peroxisomal cargo proteins bound to PEX5 receptor. The PEX13-PEX14 docking complex forms a large import pore which can be opened to a diameter of about 9 nm. Mechanistically, PEX5 receptor along with cargo proteins associates with the PEX14 subunit of the PEX13-PEX14 docking complex in the cytosol, leading to the insertion of the receptor into the organelle membrane with the concomitant translocation of the cargo into the peroxisome matrix. Involved in the import of PTS1- and PTS2-type containing proteins. This Rattus norvegicus (Rat) protein is Peroxisomal membrane protein PEX13.